Consider the following 674-residue polypeptide: Slender lobes-like protein (674 aa).

Disordered regions lie at residues 65 to 137 (LEKS…NASK), 168 to 321 (NELN…TIKK), and 352 to 382 (QKSRRQSLHVPSPELAAKNPKLRRRSERVEV). Residues 73–97 (PKKKVQTKKHLPPVRKKDSVKRRRI) show a composition bias toward basic residues. Over residues 127-137 (NQSNCSSNASK) the composition is skewed to polar residues. The span at 216-228 (VDSDDEEEQDQDQ) shows a compositional bias: acidic residues. Basic and acidic residues predominate over residues 233–245 (KPAESENHSEIKK). Residue Ser-248 is modified to Phosphoserine. Residues 272–312 (EDPKEAGKNEESDKDKPAENGKSDKDKQAETEMSDEDKPSE) show a composition bias toward basic and acidic residues. Phosphoserine occurs at positions 358 and 391. Disordered stretches follow at residues 395-585 (MVAE…AGYV) and 618-659 (KYFR…NSAK). Over residues 400–410 (KRQKNKRKRLS) the composition is skewed to basic residues. Residue Ser-414 is modified to Phosphoserine. Positions 548 to 558 (AKQKKKGKKKQ) are enriched in basic residues.

The sequence is that of Slender lobes-like protein from Drosophila melanogaster (Fruit fly).